Consider the following 380-residue polypeptide: Erythronate-4-phosphate dehydrogenase (380 aa).

Substrate is bound by residues serine 45 and threonine 66. Aspartate 146 is an NAD(+) binding site. The active site involves arginine 207. Aspartate 232 provides a ligand contact to NAD(+). The active site involves glutamate 237. The Proton donor role is filled by histidine 254. Residue glycine 257 participates in NAD(+) binding. Substrate is bound at residue tyrosine 258.

It belongs to the D-isomer specific 2-hydroxyacid dehydrogenase family. PdxB subfamily. As to quaternary structure, homodimer.

The protein localises to the cytoplasm. It carries out the reaction 4-phospho-D-erythronate + NAD(+) = (R)-3-hydroxy-2-oxo-4-phosphooxybutanoate + NADH + H(+). The protein operates within cofactor biosynthesis; pyridoxine 5'-phosphate biosynthesis; pyridoxine 5'-phosphate from D-erythrose 4-phosphate: step 2/5. Its function is as follows. Catalyzes the oxidation of erythronate-4-phosphate to 3-hydroxy-2-oxo-4-phosphonooxybutanoate. The chain is Erythronate-4-phosphate dehydrogenase from Marinomonas sp. (strain MWYL1).